Here is an 88-residue protein sequence, read N- to C-terminus: Cell division topological specificity factor (88 aa).

It belongs to the MinE family.

In terms of biological role, prevents the cell division inhibition by proteins MinC and MinD at internal division sites while permitting inhibition at polar sites. This ensures cell division at the proper site by restricting the formation of a division septum at the midpoint of the long axis of the cell. The protein is Cell division topological specificity factor of Herminiimonas arsenicoxydans.